A 71-amino-acid polypeptide reads, in one-letter code: UPF0346 protein Sez_1447 (71 aa).

This sequence belongs to the UPF0346 family.

The polypeptide is UPF0346 protein Sez_1447 (Streptococcus equi subsp. zooepidemicus (strain MGCS10565)).